A 334-amino-acid polypeptide reads, in one-letter code: Glycerol-1-phosphate dehydrogenase [NAD(P)+] (334 aa).

Residues Gly-77 to Asp-81 and Thr-99 to Ser-102 contribute to the NAD(+) site. Asp-104 is a substrate binding site. Ser-108 serves as a coordination point for NAD(+). Asp-147 contributes to the substrate binding site. Zn(2+) is bound by residues Asp-147 and His-225. Residue His-229 coordinates substrate. Residue His-246 coordinates Zn(2+).

It belongs to the glycerol-1-phosphate dehydrogenase family. Requires Zn(2+) as cofactor.

It localises to the cytoplasm. The enzyme catalyses sn-glycerol 1-phosphate + NAD(+) = dihydroxyacetone phosphate + NADH + H(+). It catalyses the reaction sn-glycerol 1-phosphate + NADP(+) = dihydroxyacetone phosphate + NADPH + H(+). The protein operates within membrane lipid metabolism; glycerophospholipid metabolism. Catalyzes the NAD(P)H-dependent reduction of dihydroxyacetonephosphate (DHAP or glycerone phosphate) to glycerol 1-phosphate (G1P). The G1P thus generated is used as the glycerophosphate backbone of phospholipids in the cellular membranes of Archaea. This Methanococcus maripaludis (strain C7 / ATCC BAA-1331) protein is Glycerol-1-phosphate dehydrogenase [NAD(P)+].